The chain runs to 224 residues: DNA mismatch repair protein MutH (224 aa).

It belongs to the MutH family.

The protein localises to the cytoplasm. Sequence-specific endonuclease that cleaves unmethylated GATC sequences. It is involved in DNA mismatch repair. This Histophilus somni (strain 2336) (Haemophilus somnus) protein is DNA mismatch repair protein MutH.